The sequence spans 426 residues: Trigger factor (426 aa).

Residues Gly-165–Pro-239 form the PPIase FKBP-type domain.

Belongs to the FKBP-type PPIase family. Tig subfamily.

The protein resides in the cytoplasm. The catalysed reaction is [protein]-peptidylproline (omega=180) = [protein]-peptidylproline (omega=0). In terms of biological role, involved in protein export. Acts as a chaperone by maintaining the newly synthesized protein in an open conformation. Functions as a peptidyl-prolyl cis-trans isomerase. This chain is Trigger factor, found in Pelodictyon phaeoclathratiforme (strain DSM 5477 / BU-1).